Reading from the N-terminus, the 335-residue chain is Phosphate acyltransferase (335 aa).

This sequence belongs to the PlsX family. Homodimer. Probably interacts with PlsY.

The protein localises to the cytoplasm. It catalyses the reaction a fatty acyl-[ACP] + phosphate = an acyl phosphate + holo-[ACP]. It participates in lipid metabolism; phospholipid metabolism. Its function is as follows. Catalyzes the reversible formation of acyl-phosphate (acyl-PO(4)) from acyl-[acyl-carrier-protein] (acyl-ACP). This enzyme utilizes acyl-ACP as fatty acyl donor, but not acyl-CoA. The protein is Phosphate acyltransferase of Clostridium botulinum (strain Langeland / NCTC 10281 / Type F).